A 361-amino-acid chain; its full sequence is Aminomethyltransferase (361 aa).

The protein belongs to the GcvT family. The glycine cleavage system is composed of four proteins: P, T, L and H.

It catalyses the reaction N(6)-[(R)-S(8)-aminomethyldihydrolipoyl]-L-lysyl-[protein] + (6S)-5,6,7,8-tetrahydrofolate = N(6)-[(R)-dihydrolipoyl]-L-lysyl-[protein] + (6R)-5,10-methylene-5,6,7,8-tetrahydrofolate + NH4(+). In terms of biological role, the glycine cleavage system catalyzes the degradation of glycine. The protein is Aminomethyltransferase of Bacteroides fragilis (strain ATCC 25285 / DSM 2151 / CCUG 4856 / JCM 11019 / LMG 10263 / NCTC 9343 / Onslow / VPI 2553 / EN-2).